Reading from the N-terminus, the 65-residue chain is Trypsin inhibitor (65 aa).

As to quaternary structure, homotrimer.

In Zea mays (Maize), this protein is Trypsin inhibitor.